Consider the following 520-residue polypeptide: Translation initiation factor IF3-1, mitochondrial (520 aa).

Residues 1-66 constitute a mitochondrion transit peptide; that stretch reads MAIWRIINRS…SNIFQNLRFL (66 aa). The segment covering 271-282 has biased composition (basic and acidic residues); the sequence is ARVKEESPKPDS. The tract at residues 271–520 is disordered; the sequence is ARVKEESPKP…YGIFSTPKTK (250 aa). A compositionally biased stretch (polar residues) spans 336-361; that stretch reads EPQSPNQHVNPQRPRFSNQAPNQQPT. Residues 369 to 379 are compositionally biased toward pro residues; it reads PNQPPSAPRPQ. 2 stretches are compositionally biased toward polar residues: residues 404 to 422 and 458 to 468; these read NQAP…FPNQ and FQNQAPNQQPT. A compositionally biased stretch (pro residues) spans 473-485; it reads PQPPNPPRAPPRP.

It belongs to the IF-3 family. Monomer.

Its subcellular location is the mitochondrion. IF-3 binds to the 30S ribosomal subunit and shifts the equilibrium between 70S ribosomes and their 50S and 30S subunits in favor of the free subunits, thus enhancing the availability of 30S subunits on which protein synthesis initiation begins. The chain is Translation initiation factor IF3-1, mitochondrial from Arabidopsis thaliana (Mouse-ear cress).